The following is a 115-amino-acid chain: DNA-binding protein STK_13740 (115 aa).

Belongs to the PDCD5 family.

This chain is DNA-binding protein STK_13740, found in Sulfurisphaera tokodaii (strain DSM 16993 / JCM 10545 / NBRC 100140 / 7) (Sulfolobus tokodaii).